Here is a 587-residue protein sequence, read N- to C-terminus: Protein IQ-DOMAIN 31 (587 aa).

The segment at 57 to 80 (ETNTVDRSGGMLETQNVGPEEISD) is disordered. Serine 79 carries the phosphoserine modification. IQ domains are found at residues 112–140 (REIA…GIIR), 141–163 (LQAL…SVMG), and 164–188 (IVRL…VYRK). Positions 149 to 159 (LVRRQAVATLF) are calmodulin-binding. The Nuclear localization signal motif lies at 176–183 (IRKSDIGV). The disordered stretch occupies residues 344–587 (NPVVESSIQP…AKTTPAERKR (244 aa)). Basic and acidic residues-rich tracts occupy residues 357–373 (PRKE…KTRE) and 390–413 (CDEK…EMEV). The segment covering 424–434 (ALDSSLVNQID) has biased composition (polar residues). Composition is skewed to basic and acidic residues over residues 435–472 (SNEK…ENQK) and 482–494 (KTER…HHET). Polar residues-rich tracts occupy residues 495–506 (SPSIPSYMQATK) and 544–561 (RITS…SGDK).

Belongs to the IQD family. As to quaternary structure, binds to multiple calmodulin (CaM) in the presence of Ca(2+) and CaM-like proteins.

It is found in the nucleus. The protein resides in the nucleus envelope. Its subcellular location is the cytoplasm. The protein localises to the cytoskeleton. It localises to the cell membrane. Its function is as follows. May be involved in cooperative interactions with calmodulins or calmodulin-like proteins. Recruits calmodulin proteins to microtubules, thus being a potential scaffold in cellular signaling and trafficking. May associate with nucleic acids and regulate gene expression at the transcriptional or post-transcriptional level. This is Protein IQ-DOMAIN 31 from Arabidopsis thaliana (Mouse-ear cress).